A 269-amino-acid polypeptide reads, in one-letter code: Phosphonoacetaldehyde hydrolase (269 aa).

D10 serves as the catalytic Nucleophile. Mg(2+) contacts are provided by D10 and A12. K52 (schiff-base intermediate with substrate) is an active-site residue. Residue D186 coordinates Mg(2+).

This sequence belongs to the HAD-like hydrolase superfamily. PhnX family. As to quaternary structure, homodimer. Requires Mg(2+) as cofactor.

It carries out the reaction phosphonoacetaldehyde + H2O = acetaldehyde + phosphate + H(+). Functionally, involved in phosphonate degradation. The polypeptide is Phosphonoacetaldehyde hydrolase (Salmonella heidelberg (strain SL476)).